Here is a 554-residue protein sequence, read N- to C-terminus: Endochitinase (554 aa).

The N-terminal stretch at 1 to 19 (MRATLATLAVLALATAVQS) is a signal peptide. Residues 23-398 (ARIVCYFSNW…KILHKHMSSY (376 aa)) form the GH18 domain. C27 and C52 are disulfide-bonded. 76 to 77 (LD) provides a ligand contact to chitin. N85 carries N-linked (GlcNAc...) asparagine glycosylation. Chitin is bound at residue 103 to 106 (GGWA). E146 serves as the catalytic Proton donor. Chitin contacts are provided by residues Y147 and 213-216 (MSYD). N303 carries N-linked (GlcNAc...) asparagine glycosylation. W370 is a chitin binding site. A disordered region spans residues 398–494 (YTVPPPHTEN…VPPTENEVDG (97 aa)). Residues 431-457 (PTTTTAKPASTTKTTVKTTTTTTAKPP) show a composition bias toward low complexity. Basic and acidic residues predominate over residues 467–477 (INVRPEPKPEP). Residues 495-553 (SEICNSDQDYIPDKKHCDKYWRCVNGEAMQFSCQHGTVFNVELNVCDWPSNATRRECQQ) enclose the Chitin-binding type-2 domain. C527 and C540 are joined by a disulfide. N545 is a glycosylation site (N-linked (GlcNAc...) asparagine).

This sequence belongs to the glycosyl hydrolase 18 family. Chitinase class II subfamily. As to expression, epidermis and gut.

The protein localises to the secreted. The enzyme catalyses Random endo-hydrolysis of N-acetyl-beta-D-glucosaminide (1-&gt;4)-beta-linkages in chitin and chitodextrins.. Digests chitin in the exoskeleton during the molting process. In Manduca sexta (Tobacco hawkmoth), this protein is Endochitinase.